Here is a 117-residue protein sequence, read N- to C-terminus: Minor capsid protein VP2 (117 aa).

The protein belongs to the lagovirus VP2 protein family. As to quaternary structure, homooligomer. The portal-like structure consists in 12 copies of VP2. Interacts with capsid protein VP1.

It localises to the virion. It is found in the host cytoplasm. Minor structural protein that forms a portal-like structure at a unique three-fold axis of symmetry, following binding to the host receptor. The channel formed by VP2 may allow the delivery of the viral genome through the host endosomal membrane. The polypeptide is Minor capsid protein VP2 (Oryctolagus cuniculus (Rabbit)).